The primary structure comprises 257 residues: Imidazole glycerol phosphate synthase subunit HisF (257 aa).

Active-site residues include Asp-12 and Asp-131.

The protein belongs to the HisA/HisF family. Heterodimer of HisH and HisF.

The protein resides in the cytoplasm. It catalyses the reaction 5-[(5-phospho-1-deoxy-D-ribulos-1-ylimino)methylamino]-1-(5-phospho-beta-D-ribosyl)imidazole-4-carboxamide + L-glutamine = D-erythro-1-(imidazol-4-yl)glycerol 3-phosphate + 5-amino-1-(5-phospho-beta-D-ribosyl)imidazole-4-carboxamide + L-glutamate + H(+). The protein operates within amino-acid biosynthesis; L-histidine biosynthesis; L-histidine from 5-phospho-alpha-D-ribose 1-diphosphate: step 5/9. Its function is as follows. IGPS catalyzes the conversion of PRFAR and glutamine to IGP, AICAR and glutamate. The HisF subunit catalyzes the cyclization activity that produces IGP and AICAR from PRFAR using the ammonia provided by the HisH subunit. In Burkholderia mallei (strain NCTC 10247), this protein is Imidazole glycerol phosphate synthase subunit HisF.